Reading from the N-terminus, the 551-residue chain is Cytochrome P450 monooxygenase FCK2 (551 aa).

Helical transmembrane passes span 8–28 (FDPA…VFIF), 35–55 (LHVF…VYIV), and 69–89 (VTTI…ISIL). An N-linked (GlcNAc...) asparagine glycan is attached at Asn258. Cys493 is a heme binding site.

The protein belongs to the cytochrome P450 family. The cofactor is heme.

The protein resides in the membrane. Its pathway is secondary metabolite biosynthesis. Its function is as follows. Cytochrome P450 monooxygenase; part of the gene cluster that mediates the biosynthesis of cytokinins such as fusatin, fusatinic acids or 8-oxofusatin, known for their growth promoting and anti-senescence activities toward host plants. FCK1 is a bifunctional enzyme that performs the first steps in the biosynthesis of Fusarium cytokinins. It first condenses adenosine monophosphate (AMP) with dimethylallyl diphosphate (DMAPP) to yield isoprenyl adenosine monophosphate. It then catalyzes the removal of the phosphoribose to produce isopentenylaldehyde. The cytochrome P450 monooxygenase then converts isopentenylaldehyde to trans-zeatin. A condensation step converts trans-zeatin to fusatin which is further modified to produce fusatinic acid. The mechanism for oxidation of fusatin to fusatinic acid remains unknown. 8-oxofusatin could be produced through several pathways, via direct oxygenation of fusatin, or via the 8-oxo-pentenyladenine intermediate which itself must arise from either the prenylation of 8-oxo-AMP by FCK1 and/or oxygenation of isopentenylaldehyde. Both the FCK3 and FCK4 enzymes act downstream of the identified cytokinins to produce yet unidentified compounds. The protein is Cytochrome P450 monooxygenase FCK2 of Fusarium pseudograminearum (strain CS3096) (Wheat and barley crown-rot fungus).